The sequence spans 483 residues: Cytochrome P450 monooxygenase stcF (483 aa).

Cysteine 424 is a binding site for heme.

This sequence belongs to the cytochrome P450 family. Heme serves as cofactor.

It participates in mycotoxin biosynthesis; sterigmatocystin biosynthesis. In terms of biological role, cytochrome P450 monooxygenase; part of the gene cluster that mediates the biosynthesis of sterigmatocystin (ST), a polyketide-derived furanocoumarin which is part of the most toxic and carcinogenic compounds among the known mycotoxins. The first step in the biosynthesis of sterigmatocystin is the production of hexanoate by the fatty acid synthase (FAS) units stcJ and stcK. The polyketide backbone is assembled by the non-reducing polyketide synthase stcA by condensation of the starter hexanoyl-CoA and 7 malonyl-CoA extender units followed by cyclization and release of norsolorinic acid. Norsolorinic acid is the first stable intermediate in the biosynthesis of sterigmatocystin and is converted into averantin (AVN) by the ketoreductase stcE which reduces the hexanoate ketone to an alcohol. Averantin is then oxidized into 5'-hydroxyaverantin (HAVN) by the cytochrome P450 monooxygenase stcF. 5'-hydroxyaverantin is further converted to 5'-oxyaverantin (OAVN) by the 5'-hydroxyaverantin dehydrogenase stcG. The next step is the conversion of OAVN into averufin (AVF) which is catalyzed by a yet to be identified enzyme. The cytochrome P450 monooxygenase stcB and the flavin-binding monooxygenase stcW are both required for the conversion of averufin to 1-hydroxyversicolorone. The esterase stcI probably catalyzes the formation of versiconal hemiacetal acetate from 1-hydroxyversicolorone. The oxydoreductase stcN then probably catalyzes the biosynthetic step from versiconal to versicolorin B (VERB). The next step is performed by the versicolorin B desaturase stcL to produce versicolorin A (VERA). The ketoreductase stcU and the cytochrome P450 monooxygenase stcS are involved in the conversion of versicolorin A to demethylsterigmatocystin. The Baeyer-Villiger oxidas stcQ and the reductase stcR might be involved in the biosynthetic step from versicolorin A to demethylsterigmatocystin. The final step in the biosynthesis of sterigmatocystin is the methylation of demethylsterigmatocystin catalyzed by the methyltransferase stcP. The chain is Cytochrome P450 monooxygenase stcF from Emericella nidulans (strain FGSC A4 / ATCC 38163 / CBS 112.46 / NRRL 194 / M139) (Aspergillus nidulans).